Here is a 569-residue protein sequence, read N- to C-terminus: Cytochrome P450 monooxygenase abl1 (569 aa).

Position 464 (Cys464) interacts with heme.

This sequence belongs to the cytochrome P450 family. The cofactor is heme.

It participates in hormone biosynthesis. Its function is as follows. Cytochrome P450 monooxygenase; part of the gene cluster that mediates the biosynthesis of abscisic acid (ABA), a phytohormone that acts antagonistically toward salicylic acid (SA), jasmonic acid (JA) and ethylene (ETH) signaling, to impede plant defense responses. The first step of the pathway catalyzes the reaction from farnesyl diphosphate to alpha-ionylideneethane performed by the alpha-ionylideneethane synthase abl3 via a three-step reaction mechanism involving 2 neutral intermediates, beta-farnesene and allofarnesene. The cytochrome P450 monooxygenase abl1 might then be involved in the conversion of alpha-ionylideneethane to alpha-ionylideneacetic acid. Alpha-ionylideneacetic acid is further converted to abscisic acid in 2 steps involving the cytochrome P450 monooxygenase abl2 and the short-chain dehydrogenase/reductase abl4, via the intermediates 1'-deoxy-ABA or 1',4'-trans-diol-ABA, depending on the order of action of these 2 enzymes. Abl2 is responsible for the hydroxylation of carbon atom C-1' and abl4 might be involved in the oxidation of the C-4' carbon atom. In Leptosphaeria maculans (strain JN3 / isolate v23.1.3 / race Av1-4-5-6-7-8) (Blackleg fungus), this protein is Cytochrome P450 monooxygenase abl1.